The primary structure comprises 284 residues: CBY1-interacting BAR domain-containing protein 1-A (284 aa).

Residues M1–K48 constitute a mitochondrion transit peptide. A BAR-like region spans residues D11–V221. Coiled coils occupy residues R142–L184 and N260–N284. Polar residues predominate over residues S242–R261. The segment at S242–N284 is disordered. The span at E267–N284 shows a compositional bias: acidic residues.

The protein belongs to the CIBAR family.

The protein localises to the cytoplasm. It is found in the cytoskeleton. Its subcellular location is the microtubule organizing center. The protein resides in the centrosome. It localises to the centriole. The protein localises to the nucleus. It is found in the mitochondrion inner membrane. Its subcellular location is the cell projection. The protein resides in the cilium. It localises to the flagellum. Functionally, plays a critical role in regulating mitochondrial ultrastructure and function by maintaining the integrity of mitochondrial morphology, particularly the organization of cristae. Plays a crucial role in ciliogenesis. Plays a key role in the correct positioning of the annulus, a septin-based ring structure in the sperm flagellum, serving both as a physical barrier and a membrane diffusion barrier that separates the midpiece (MP) from the principal piece (PP). This chain is CBY1-interacting BAR domain-containing protein 1-A, found in Xenopus laevis (African clawed frog).